Reading from the N-terminus, the 343-residue chain is Arginine-hydroxylase NDUFAF5, mitochondrial (343 aa).

A mitochondrion-targeting transit peptide spans Met1 to Val29.

This sequence belongs to the methyltransferase superfamily. As to quaternary structure, interacts with NDUFAF8, leading to stabilize NDUFAF5. Interacts with NDUFS7. Interacts with PYURF (via TRM112 domain); the interaction is direct and stabilizes NDUFAF5 protein.

The protein localises to the mitochondrion inner membrane. Functionally, arginine hydroxylase that mediates hydroxylation of 'Arg-122' of NDUFS7 and is involved in the assembly of mitochondrial NADH:ubiquinone oxidoreductase complex (complex I, MT-ND1) at early stages. May also have methyltransferase activity. The polypeptide is Arginine-hydroxylase NDUFAF5, mitochondrial (Mus musculus (Mouse)).